Here is a 215-residue protein sequence, read N- to C-terminus: LysM and putative peptidoglycan-binding domain-containing protein 2 (215 aa).

A disordered region spans residues 1–40 (MADSSPALSLREGGPRAPRPSAPSPPPRSRSGSESEEAEL). The residue at position 2 (A2) is an N-acetylalanine. Phosphoserine is present on residues S5, S24, S33, and S57. Positions 17-28 (APRPSAPSPPPR) are enriched in pro residues. The 45-residue stretch at 71–115 (VEHRVRAGDTLQGIALKYGVTMEQIKRANKLFTNDCIFLKKTLNI) folds into the LysM domain. Disordered stretches follow at residues 132-175 (DSPE…EEVS) and 193-215 (AAKK…LYHS). Residues 196-205 (KLKEESRDEE) are compositionally biased toward basic and acidic residues.

The polypeptide is LysM and putative peptidoglycan-binding domain-containing protein 2 (LYSMD2) (Homo sapiens (Human)).